A 264-amino-acid polypeptide reads, in one-letter code: Hydroxyethylthiazole kinase (264 aa).

Methionine 52 serves as a coordination point for substrate. Arginine 127 and threonine 173 together coordinate ATP. Glycine 200 lines the substrate pocket.

The protein belongs to the Thz kinase family. It depends on Mg(2+) as a cofactor.

It catalyses the reaction 5-(2-hydroxyethyl)-4-methylthiazole + ATP = 4-methyl-5-(2-phosphooxyethyl)-thiazole + ADP + H(+). Its pathway is cofactor biosynthesis; thiamine diphosphate biosynthesis; 4-methyl-5-(2-phosphoethyl)-thiazole from 5-(2-hydroxyethyl)-4-methylthiazole: step 1/1. Catalyzes the phosphorylation of the hydroxyl group of 4-methyl-5-beta-hydroxyethylthiazole (THZ). This Pectobacterium carotovorum subsp. carotovorum (strain PC1) protein is Hydroxyethylthiazole kinase.